The chain runs to 254 residues: Tyrosine-protein phosphatase YwqE (254 aa).

The protein belongs to the metallo-dependent hydrolases superfamily. CpsB/CapC family. The cofactor is Mn(2+).

The catalysed reaction is O-phospho-L-tyrosyl-[protein] + H2O = L-tyrosyl-[protein] + phosphate. Inhibited by vanadate and sodium pyrophosphate. Not inhibited by sodium fluoride. Its function is as follows. Dephosphorylates the phosphotyrosine-containing proteins YwqD, YwqF and Ssb. This is Tyrosine-protein phosphatase YwqE (ywqE) from Bacillus subtilis (strain 168).